We begin with the raw amino-acid sequence, 78 residues long: Exodeoxyribonuclease 7 small subunit (78 aa).

It belongs to the XseB family. As to quaternary structure, heterooligomer composed of large and small subunits.

The protein resides in the cytoplasm. The enzyme catalyses Exonucleolytic cleavage in either 5'- to 3'- or 3'- to 5'-direction to yield nucleoside 5'-phosphates.. Functionally, bidirectionally degrades single-stranded DNA into large acid-insoluble oligonucleotides, which are then degraded further into small acid-soluble oligonucleotides. This chain is Exodeoxyribonuclease 7 small subunit, found in Mycobacterium leprae (strain TN).